A 475-amino-acid chain; its full sequence is Sensor histidine kinase GlrK (475 aa).

At 1–13 the chain is on the cytoplasmic side; sequence MKRWPVFPRSLRQ. Residues 14 to 34 traverse the membrane as a helical segment; the sequence is LVMLAFLLILLPLLVLAWQAW. Residues 35-173 lie on the Periplasmic side of the membrane; that stretch reads QSLNALSDQA…LQREIAERGQ (139 aa). The chain crosses the membrane as a helical span at residues 174–194; the sequence is YFGWQSLVLFLVSLVMVLLFT. The Cytoplasmic portion of the chain corresponds to 195–475; it reads RMIIGPVKNI…IELPSSKNTK (281 aa). One can recognise a Histidine kinase domain in the interval 256 to 472; that stretch reads HLSHELKTPL…CFRIELPSSK (217 aa). Residue H259 is modified to Phosphohistidine; by autocatalysis.

Autophosphorylated.

Its subcellular location is the cell inner membrane. It carries out the reaction ATP + protein L-histidine = ADP + protein N-phospho-L-histidine.. Functionally, member of the two-component regulatory system GlrR/GlrK that up-regulates transcription of the glmY sRNA when cells enter the stationary growth phase. Activates GlrR by phosphorylation. The protein is Sensor histidine kinase GlrK (glrK) of Escherichia coli (strain K12).